Reading from the N-terminus, the 447-residue chain is Naphthalene 1,2-dioxygenase system, large oxygenase component (447 aa).

Residues 37–135 form the Rieske domain; the sequence is WLFLTHDSLI…IKKKCLGLKE (99 aa). Cysteine 79, histidine 81, cysteine 99, and histidine 102 together coordinate [2Fe-2S] cluster. Residues histidine 206, histidine 211, and aspartate 360 each contribute to the Fe cation site.

It belongs to the bacterial ring-hydroxylating dioxygenase alpha subunit family. In terms of assembly, the naphthalene dioxygenase (NDO) multicomponent enzyme system is composed of an electron transfer component and a dioxygenase component (iron sulfur protein (ISP)). The electron transfer component is composed of a ferredoxin reductase (NagAa) and a ferredoxin (NagAb), and the dioxygenase component is formed by a large alpha subunit (NagAc) and a small beta subunit (NagAd). It depends on [2Fe-2S] cluster as a cofactor. Requires Fe(2+) as cofactor.

It carries out the reaction naphthalene + NADH + O2 + H(+) = (1R,2S)-1,2-dihydronaphthalene-1,2-diol + NAD(+). It functions in the pathway aromatic compound metabolism; naphthalene degradation. In terms of biological role, component of the naphthalene dioxygenase (NDO) multicomponent enzyme system which catalyzes the incorporation of both atoms of molecular oxygen into naphthalene to form cis-(1R,2S)-dihydroxy-1,2-dihydronaphthalene. The alpha subunit has a catalytic role in the holoenzyme. Also able to use styrene as substrate. The chain is Naphthalene 1,2-dioxygenase system, large oxygenase component from Ralstonia sp.